A 528-amino-acid chain; its full sequence is MKDASWRDHCTMGCSLFFLALICGSIIGYFLYSFFNQKKLEEKKQAFDNKLKEKEKDLQKREQEMMRNAKIEIASLRQKLELDLEQRTNTIVDLESKNNRREELLNNRTESLNKREEHLDSEKQIISHTKKNLEQQIKEQETILNTQKQQLEKIASLTQDQARQIIMKETRDQTTYEMMSYIKQEEEKAKSEASKKAKTLLVLAMQKYSGDITGEKNISVVNIPNEDMKGRIIGRQGRNIKSLEVLTGVDLIIDESPCTVILSSFDPIRREIAKKTLEFLVSDGRIHPSRIEKALETSTIEVDNFIKEMGEEATFITKIGEVHPDLIKILGKLHFRISYSQNVLKHSLEVAFLAGKLASEIGENEILARRAGLFHDIGKALDHEMEGSHVEIGVSIASKYKEKKEVIDAIASHHEDQEPQSIIAALVAIADTLSSARPGARKESVENYIQRLTKLETIANSTKGVAKSYAIQAGREIRVIVEPDKIADNFIFQTARTIKEQIEKEIIYNGVIKVTVLRETRAVEMAKL.

Residues 15–35 form a helical membrane-spanning segment; the sequence is SLFFLALICGSIIGYFLYSFF. Residues 217 to 277 enclose the KH domain; sequence NISVVNIPNE…IRREIAKKTL (61 aa). The region spanning 343-436 is the HD domain; sequence VLKHSLEVAF…VAIADTLSSA (94 aa).

Belongs to the RNase Y family.

It localises to the cell membrane. Endoribonuclease that initiates mRNA decay. The polypeptide is Ribonuclease Y (Aster yellows witches'-broom phytoplasma (strain AYWB)).